Here is a 373-residue protein sequence, read N- to C-terminus: 5-amino-6-(5-phospho-D-ribitylamino)uracil phosphatase, chloroplastic (373 aa).

Belongs to the HAD-like hydrolase superfamily. DOG/GPP family. Homodimer. Mg(2+) is required as a cofactor.

The protein localises to the plastid. Its subcellular location is the chloroplast. It catalyses the reaction 5-amino-6-(5-phospho-D-ribitylamino)uracil + H2O = 5-amino-6-(D-ribitylamino)uracil + phosphate. Its function is as follows. Catalyzes the dephosphorylation of 5-amino-6-(5-phospho-D-ribitylamino)uracil, also known as ARPP, but has no activity toward flavin mononucleotide (FMN). This is 5-amino-6-(5-phospho-D-ribitylamino)uracil phosphatase, chloroplastic from Arabidopsis thaliana (Mouse-ear cress).